Consider the following 71-residue polypeptide: UPF0337 protein RPA4418 (71 aa).

A disordered region spans residues 1–54 (MGSTMDKIKGQANELAGKAKQGIGEATGSDKLKGEGAIQEAKGHGQQALGNAKD).

It belongs to the UPF0337 (CsbD) family.

This Rhodopseudomonas palustris (strain ATCC BAA-98 / CGA009) protein is UPF0337 protein RPA4418.